A 371-amino-acid polypeptide reads, in one-letter code: F-box protein At2g41170 (371 aa).

In terms of domain architecture, F-box spans 56-102 (KMSLLDLPDLTLDCILEKLSPSELCAMTSVCSELRDKCVSDHLWEKH).

In Arabidopsis thaliana (Mouse-ear cress), this protein is F-box protein At2g41170.